Here is a 181-residue protein sequence, read N- to C-terminus: UPF0397 protein SUB0313 (181 aa).

The next 5 membrane-spanning stretches (helical) occupy residues alanine 11 to phenylalanine 31, leucine 45 to leucine 65, phenylalanine 69 to isoleucine 89, valine 114 to isoleucine 134, and leucine 147 to alanine 167.

The protein belongs to the UPF0397 family.

Its subcellular location is the cell membrane. This is UPF0397 protein SUB0313 from Streptococcus uberis (strain ATCC BAA-854 / 0140J).